The primary structure comprises 158 residues: NAD(P)H-quinone oxidoreductase subunit J, chloroplastic (158 aa).

The protein belongs to the complex I 30 kDa subunit family. As to quaternary structure, NDH is composed of at least 16 different subunits, 5 of which are encoded in the nucleus.

It is found in the plastid. Its subcellular location is the chloroplast thylakoid membrane. It catalyses the reaction a plastoquinone + NADH + (n+1) H(+)(in) = a plastoquinol + NAD(+) + n H(+)(out). The enzyme catalyses a plastoquinone + NADPH + (n+1) H(+)(in) = a plastoquinol + NADP(+) + n H(+)(out). NDH shuttles electrons from NAD(P)H:plastoquinone, via FMN and iron-sulfur (Fe-S) centers, to quinones in the photosynthetic chain and possibly in a chloroplast respiratory chain. The immediate electron acceptor for the enzyme in this species is believed to be plastoquinone. Couples the redox reaction to proton translocation, and thus conserves the redox energy in a proton gradient. This Panax ginseng (Korean ginseng) protein is NAD(P)H-quinone oxidoreductase subunit J, chloroplastic.